The following is a 235-amino-acid chain: Probable GTP-binding protein EngB (235 aa).

The EngB-type G domain maps to 23-219 (QVPEIAFAGR…NDKIIELLGL (197 aa)). GTP-binding positions include 31–38 (GRSNAGKS), 58–62 (GRTQH), 92–95 (DLPG), 159–162 (TKSD), and 193–200 (FTAQMFSA). Residues S38 and T60 each coordinate Mg(2+).

It belongs to the TRAFAC class TrmE-Era-EngA-EngB-Septin-like GTPase superfamily. EngB GTPase family. Mg(2+) serves as cofactor.

Necessary for normal cell division and for the maintenance of normal septation. In Janthinobacterium sp. (strain Marseille) (Minibacterium massiliensis), this protein is Probable GTP-binding protein EngB.